The sequence spans 660 residues: UvrABC system protein B (660 aa).

The region spanning A26 to R413 is the Helicase ATP-binding domain. G39–T46 contacts ATP. Residues Y92–I115 carry the Beta-hairpin motif. One can recognise a Helicase C-terminal domain in the interval Q430 to I592. One can recognise a UVR domain in the interval E624–E659.

It belongs to the UvrB family. Forms a heterotetramer with UvrA during the search for lesions. Interacts with UvrC in an incision complex.

The protein resides in the cytoplasm. In terms of biological role, the UvrABC repair system catalyzes the recognition and processing of DNA lesions. A damage recognition complex composed of 2 UvrA and 2 UvrB subunits scans DNA for abnormalities. Upon binding of the UvrA(2)B(2) complex to a putative damaged site, the DNA wraps around one UvrB monomer. DNA wrap is dependent on ATP binding by UvrB and probably causes local melting of the DNA helix, facilitating insertion of UvrB beta-hairpin between the DNA strands. Then UvrB probes one DNA strand for the presence of a lesion. If a lesion is found the UvrA subunits dissociate and the UvrB-DNA preincision complex is formed. This complex is subsequently bound by UvrC and the second UvrB is released. If no lesion is found, the DNA wraps around the other UvrB subunit that will check the other stand for damage. This Halalkalibacterium halodurans (strain ATCC BAA-125 / DSM 18197 / FERM 7344 / JCM 9153 / C-125) (Bacillus halodurans) protein is UvrABC system protein B.